A 188-amino-acid polypeptide reads, in one-letter code: Threonylcarbamoyl-AMP synthase (188 aa).

Residues 3–188 form the YrdC-like domain; that stretch reads QLHPSDIKDI…RSGKILRNGQ (186 aa).

This sequence belongs to the SUA5 family. TsaC subfamily.

The protein localises to the cytoplasm. It carries out the reaction L-threonine + hydrogencarbonate + ATP = L-threonylcarbamoyladenylate + diphosphate + H2O. Its function is as follows. Required for the formation of a threonylcarbamoyl group on adenosine at position 37 (t(6)A37) in tRNAs that read codons beginning with adenine. Catalyzes the conversion of L-threonine, HCO(3)(-)/CO(2) and ATP to give threonylcarbamoyl-AMP (TC-AMP) as the acyladenylate intermediate, with the release of diphosphate. This is Threonylcarbamoyl-AMP synthase from Shewanella baltica (strain OS155 / ATCC BAA-1091).